The chain runs to 424 residues: Glutamyl-tRNA(Gln) amidotransferase subunit D (424 aa).

Positions 58-79 (NTNGGLNGGKEHKTAGEEVQKS) are disordered. The span at 66–78 (GKEHKTAGEEVQK) shows a compositional bias: basic and acidic residues. Residues 84–406 (PKVAILSTGG…LGQTDEFNEA (323 aa)) enclose the Asparaginase/glutaminase domain. Catalysis depends on residues T94, T170, D171, and K247.

The protein belongs to the asparaginase 1 family. GatD subfamily. In terms of assembly, heterodimer of GatD and GatE.

It carries out the reaction L-glutamyl-tRNA(Gln) + L-glutamine + ATP + H2O = L-glutaminyl-tRNA(Gln) + L-glutamate + ADP + phosphate + H(+). Functionally, allows the formation of correctly charged Gln-tRNA(Gln) through the transamidation of misacylated Glu-tRNA(Gln) in organisms which lack glutaminyl-tRNA synthetase. The reaction takes place in the presence of glutamine and ATP through an activated gamma-phospho-Glu-tRNA(Gln). The GatDE system is specific for glutamate and does not act on aspartate. The chain is Glutamyl-tRNA(Gln) amidotransferase subunit D from Methanosarcina barkeri (strain Fusaro / DSM 804).